The chain runs to 1109 residues: Protein argonaute 3 (1109 aa).

Positions 1–13 (MAGRGGRDPRRGY) are enriched in basic and acidic residues. Disordered stretches follow at residues 1–83 (MAGR…GLVR) and 125–220 (DHRD…PLSK). Composition is skewed to gly residues over residues 14–30 (DGGY…GGTN), 37–54 (RGGG…GGRG), and 62–83 (DVLG…GLVR). Residues 125–134 (DHRDQHDHQS) show a composition bias toward basic and acidic residues. Positions 135 to 161 (QRHHHRHHHHQRQRHHHHHQRQQRRGS) are enriched in basic residues. In terms of domain architecture, PAZ spans 411-521 (SVLDLVKTMK…VPIEFCNIPE (111 aa)). Over residues 527-545 (VARLDDKKSDNKGEQEKPS) the composition is skewed to basic and acidic residues. The interval 527-548 (VARLDDKKSDNKGEQEKPSTKT) is disordered. Residues 720–1023 (LLFCPMLNRC…AAYRGRLYYE (304 aa)) enclose the Piwi domain.

Belongs to the argonaute family. Ago subfamily.

Its function is as follows. Probably involved in the RNA silencing pathway. May bind to short RNAs such as microRNAs (miRNAs) or short interfering RNAs (siRNAs), and represses the translation of mRNAs which are complementary to them. The polypeptide is Protein argonaute 3 (AGO3) (Oryza sativa subsp. japonica (Rice)).